Reading from the N-terminus, the 188-residue chain is Elongation factor P (188 aa).

Belongs to the elongation factor P family.

It is found in the cytoplasm. Its pathway is protein biosynthesis; polypeptide chain elongation. Functionally, involved in peptide bond synthesis. Stimulates efficient translation and peptide-bond synthesis on native or reconstituted 70S ribosomes in vitro. Probably functions indirectly by altering the affinity of the ribosome for aminoacyl-tRNA, thus increasing their reactivity as acceptors for peptidyl transferase. The protein is Elongation factor P of Rickettsia africae (strain ESF-5).